Here is a 514-residue protein sequence, read N- to C-terminus: ATP synthase subunit alpha (514 aa).

Residue 170–177 (GDRQIGKT) coordinates ATP.

This sequence belongs to the ATPase alpha/beta chains family. As to quaternary structure, F-type ATPases have 2 components, CF(1) - the catalytic core - and CF(0) - the membrane proton channel. CF(1) has five subunits: alpha(3), beta(3), gamma(1), delta(1), epsilon(1). CF(0) has three main subunits: a(1), b(2) and c(9-12). The alpha and beta chains form an alternating ring which encloses part of the gamma chain. CF(1) is attached to CF(0) by a central stalk formed by the gamma and epsilon chains, while a peripheral stalk is formed by the delta and b chains.

It is found in the cell inner membrane. It carries out the reaction ATP + H2O + 4 H(+)(in) = ADP + phosphate + 5 H(+)(out). Functionally, produces ATP from ADP in the presence of a proton gradient across the membrane. The alpha chain is a regulatory subunit. This Pseudomonas syringae pv. tomato (strain ATCC BAA-871 / DC3000) protein is ATP synthase subunit alpha.